Consider the following 178-residue polypeptide: MGLEDSVKQLQGAIEELKGLISSVEEMKEIVKRESEDSIQEYLRSFLEPLAKDNPLFTQKHIFGKYKPERNEKKCSHIDGNYWPHLKHTFHPQLNYIVDLLEEIRNCTCKEKQHDKQLVPLPTPAESSKKPEECTNNCNCDKCRQKEKCLTIGEMSELLQNLIKIPKQSKYLEKPALF.

This is an uncharacterized protein from Cestrum parqui (CmYLCV).